A 540-amino-acid chain; its full sequence is Zinc transporter ZIP5 (540 aa).

The signal sequence occupies residues 1–20 (MMGSPVSHLLAGFCVWVVLG). Residues 21-212 (WVGGSVPNLG…PAPPGDLLSA (192 aa)) are Extracellular-facing. Asn50 is a glycosylation site (N-linked (GlcNAc...) asparagine). The tract at residues 78–101 (HGPLTGRAASPAADNSTHRPQNPE) is disordered. Polar residues predominate over residues 90-101 (ADNSTHRPQNPE). A glycan (N-linked (GlcNAc...) asparagine) is linked at Asn160. The helical transmembrane segment at 213–233 (LLQSALAVLLLSLPSPLSLLL) threads the bilayer. Over 234–244 (LRLLGPRLLRP) the chain is Cytoplasmic. A helical transmembrane segment spans residues 245 to 265 (LLGFLGALAVGTLCGDALLHL). Residues 266 to 287 (LPHAQEGRHAGPGGLPEKDLGP) lie on the Extracellular side of the membrane. The chain crosses the membrane as a helical span at residues 288-308 (GLSVLGGLFLLFVLENMLGLL). Over 309 to 444 (RHRGLRPRCC…LLQSGLSFRR (136 aa)) the chain is Cytoplasmic. Positions 324–377 (NLETRNLDPENGSGMALQPLQAAPEPGAQGQREKNSQHPPALAPPGHQGHSHGH) are disordered. Position 336 is a phosphoserine (Ser336). His375 is modified (pros-methylhistidine). The chain crosses the membrane as a helical span at residues 445–465 (LLLLSLVSGALGLGGAVLGVG). Topologically, residues 466 to 470 (LSLGP) are extracellular. Residues 471–491 (VPLTPWVFGVTAGVFLYVALV) traverse the membrane as a helical segment. Topologically, residues 492–508 (DMLPALLRPPEPLPTPH) are cytoplasmic. A helical transmembrane segment spans residues 509 to 529 (VLLQGLGLLLGGGLMLAITLL). At 530–540 (EERLLPVTTEG) the chain is on the extracellular side.

Belongs to the ZIP transporter (TC 2.A.5) family. In terms of assembly, homodimer. Post-translationally, methylated at His-375 by METTL9. N-Glycosylated. As to expression, expressed in liver, kidney, pancreas, small intestine, colon, spleen, fetal liver and fetal kidney.

The protein resides in the basolateral cell membrane. It catalyses the reaction Zn(2+)(in) = Zn(2+)(out). Uniporter that transports zinc(2+) into polarized cells of enterocytes, pancreatic acinar and endoderm cells across the basolateral membrane and participates, notably, in zinc excretion from the intestine by the uptake of zinc from the blood into the intestine. The transport mechanism is temperature- and concentration-dependent and saturable. In addition, is also a high affinity copper transporter in vitro. Also may regulate glucose-stimulated insulin secretion (GSIS) in islets primarily through the zinc-activated SIRT1-PPARGC1A axis. Could regulate the BMP/TGF-beta (bone morphogenetic protein/transforming growth factor-beta) signaling pathway and modulates extracellular matrix (ECM) proteins of the sclera. Plays a role in eye development. This is Zinc transporter ZIP5 from Homo sapiens (Human).